The chain runs to 453 residues: Phosphatidylserine decarboxylase proenzyme 1, mitochondrial (453 aa).

The N-terminal 29 residues, 1–29 (MKPRFPQNVYFLARYSYLRRFQHSQRRTF), are a transit peptide targeting the mitochondrion. The Mitochondrial matrix segment spans residues 30–74 (SSFLNNIRSNYSGARASPLGGSSGAGAGAGGGGTGDSKGNAFLVP). A helical membrane pass occupies residues 75–93 (GATMATILMLGALHARRLY). Residues 94–453 (EDKKIEEKRE…GQALGRWKEE (360 aa)) lie on the Mitochondrial intermembrane side of the membrane. Residues Asp199, His296, and Ser408 each act as charge relay system; for autoendoproteolytic cleavage activity in the active site. The active-site Schiff-base intermediate with substrate; via pyruvic acid; for decarboxylase activity is Ser408. Ser408 bears the Pyruvic acid (Ser); by autocatalysis mark.

It belongs to the phosphatidylserine decarboxylase family. PSD-B subfamily. Eukaryotic type I sub-subfamily. Heterodimer of a large membrane-associated beta subunit and a small pyruvoyl-containing alpha subunit. It depends on pyruvate as a cofactor. In terms of processing, is synthesized initially as an inactive proenzyme. Formation of the active enzyme involves a self-maturation process in which the active site pyruvoyl group is generated from an internal serine residue via an autocatalytic post-translational modification. Two non-identical subunits are generated from the proenzyme in this reaction, and the pyruvate is formed at the N-terminus of the alpha chain, which is derived from the carboxyl end of the proenzyme. The autoendoproteolytic cleavage occurs by a canonical serine protease mechanism, in which the side chain hydroxyl group of the serine supplies its oxygen atom to form the C-terminus of the beta chain, while the remainder of the serine residue undergoes an oxidative deamination to produce ammonia and the pyruvoyl prosthetic group on the alpha chain. During this reaction, the Ser that is part of the protease active site of the proenzyme becomes the pyruvoyl prosthetic group, which constitutes an essential element of the active site of the mature decarboxylase. As to expression, expressed in roots, leaves, stems and flowers.

The protein resides in the mitochondrion. Its subcellular location is the mitochondrion inner membrane. It catalyses the reaction a 1,2-diacyl-sn-glycero-3-phospho-L-serine + H(+) = a 1,2-diacyl-sn-glycero-3-phosphoethanolamine + CO2. It participates in phospholipid metabolism; phosphatidylethanolamine biosynthesis; phosphatidylethanolamine from CDP-diacylglycerol: step 2/2. Functionally, catalyzes the formation of phosphatidylethanolamine (PtdEtn) from phosphatidylserine (PtdSer). Plays a central role in phospholipid metabolism and in the interorganelle trafficking of phosphatidylserine. Contributes only to a minor proportion of PtdEtn production. The protein is Phosphatidylserine decarboxylase proenzyme 1, mitochondrial (PSD1) of Arabidopsis thaliana (Mouse-ear cress).